The primary structure comprises 661 residues: Glycogen debranching enzyme (661 aa).

Aspartate 338 functions as the Nucleophile in the catalytic mechanism. The Proton donor role is filled by glutamate 373. The segment at 460–481 is disordered; that stretch reads NQLNGEGNRDGSDRNFSNNHGV.

Belongs to the glycosyl hydrolase 13 family.

It catalyses the reaction Hydrolysis of (1-&gt;6)-alpha-D-glucosidic linkages to branches with degrees of polymerization of three or four glucose residues in limit dextrin.. It functions in the pathway glycan degradation; glycogen degradation. Removes maltotriose and maltotetraose chains that are attached by 1,6-alpha-linkage to the limit dextrin main chain, generating a debranched limit dextrin. This chain is Glycogen debranching enzyme, found in Serratia proteamaculans (strain 568).